A 217-amino-acid polypeptide reads, in one-letter code: Large ribosomal subunit protein bL21m (217 aa).

The segment covering 61-81 (PPKVTTATTPEAPAAVPTSTP) has biased composition (low complexity). The tract at residues 61–87 (PPKVTTATTPEAPAAVPTSTPFSQQPP) is disordered.

It belongs to the bacterial ribosomal protein bL21 family. Component of the mitochondrial large ribosomal subunit (mt-LSU). Mature N.crassa 74S mitochondrial ribosomes consist of a small (37S) and a large (54S) subunit. The 37S small subunit contains a 16S ribosomal RNA (16S mt-rRNA) and 32 different proteins. The 54S large subunit contains a 23S rRNA (23S mt-rRNA) and 42 different proteins.

The protein localises to the mitochondrion. Functionally, component of the mitochondrial ribosome (mitoribosome), a dedicated translation machinery responsible for the synthesis of mitochondrial genome-encoded proteins, including at least some of the essential transmembrane subunits of the mitochondrial respiratory chain. The mitoribosomes are attached to the mitochondrial inner membrane and translation products are cotranslationally integrated into the membrane. This is Large ribosomal subunit protein bL21m (mrpl49) from Neurospora crassa (strain ATCC 24698 / 74-OR23-1A / CBS 708.71 / DSM 1257 / FGSC 987).